The primary structure comprises 108 residues: uncharacterized protein (108 aa).

The segment covering 1–10 (MDMLHNKCSD) has biased composition (basic and acidic residues). The interval 1–27 (MDMLHNKCSDAIKSTSNSNLSNEVDKQ) is disordered. Positions 12 to 22 (IKSTSNSNLSN) are enriched in polar residues.

This is an uncharacterized protein from Saccharomyces cerevisiae (strain ATCC 204508 / S288c) (Baker's yeast).